A 150-amino-acid chain; its full sequence is Ribosome maturation factor RimP (150 aa).

It belongs to the RimP family.

The protein localises to the cytoplasm. Its function is as follows. Required for maturation of 30S ribosomal subunits. The chain is Ribosome maturation factor RimP from Acidithiobacillus ferrooxidans (strain ATCC 23270 / DSM 14882 / CIP 104768 / NCIMB 8455) (Ferrobacillus ferrooxidans (strain ATCC 23270)).